A 177-amino-acid polypeptide reads, in one-letter code: Inner membrane-spanning protein YciB (177 aa).

The next 5 membrane-spanning stretches (helical) occupy residues 22–42 (IFIASKSLIFISGLTCLLYWI), 50–70 (INLFSFITIAIFGSLTIIFHN), 76–96 (WKITIIYMIFSVILFISQFFM), 121–141 (FFWALFFLFCSILNIYVALCL), and 151–171 (VFGLSFLMFLSILITSIYINF).

The protein belongs to the YciB family.

The protein resides in the cell inner membrane. Plays a role in cell envelope biogenesis, maintenance of cell envelope integrity and membrane homeostasis. The sequence is that of Inner membrane-spanning protein YciB from Buchnera aphidicola subsp. Schizaphis graminum (strain Sg).